The primary structure comprises 613 residues: Leucine-rich repeat receptor-like protein FASCIATED EAR2 (613 aa).

A signal peptide spans 1–28; it reads MLTATPLPHQLLATFLLVLASATQPAVP. The Extracellular portion of the chain corresponds to 29-573; it reads ASTDRAALLA…WLGGWHGENG (545 aa). 17 LRR repeats span residues 79 to 103, 104 to 128, 130 to 150, 151 to 176, 178 to 199, 202 to 226, 227 to 250, 251 to 274, 276 to 297, 298 to 322, 324 to 346, 347 to 370, 372 to 394, 435 to 459, 460 to 483, 484 to 507, and 508 to 531; these read TPSVAELSLRGLNLTGVIPAAPLAL, LRRLRTLDLSANALSGELPCSLPRS, LALDLSRNALSGAVPTCLPSS, LPALRTLNLSANFLRLPLSPRLSFPA, LAALDLSRNAISGAVPPRIVAD, NSALLLLDLSHNRFSGEIPAGIAAV, RSLQGLFLADNQLSGDIPPGIGNL, TYLQVLDLSNNRLSGSVPAGLAGC, QLLYLQLGGNQLSGALRPELDA, LASLKVLDLSNNKISGEIPLPLAGC, SLEVVDLSGNEISGELSSAVAKW, LSLKFLSLAGNQLSGHLPDWMFSF, LLQWLDLSSNKFVGFIPDGGFNV, VQATTGIDLSGNELCGEIPEGLVDM, KGLEYLNLSCNYLAGQIPAGLGGM, GRLHTLDFSHNGLSGEVPPGIAAM, and TVLEVLNLSYNSLSGPLPTTKFPG. N-linked (GlcNAc...) asparagine glycosylation occurs at asparagine 91. Asparagine 158 carries N-linked (GlcNAc...) asparagine glycosylation. The N-linked (GlcNAc...) asparagine glycan is linked to asparagine 249. Residue asparagine 393 is glycosylated (N-linked (GlcNAc...) asparagine). A glycan (N-linked (GlcNAc...) asparagine) is linked at asparagine 466. Residue asparagine 514 is glycosylated (N-linked (GlcNAc...) asparagine). The chain crosses the membrane as a helical span at residues 574-597; it reads WVSLGAFCISTMTSFYVSLATLLC. At 598 to 613 the chain is on the cytoplasmic side; the sequence is SSNARNFVFRPVRVEY.

Expressed in ear primordia, vegetative apex and young leaf tissues. Barely detected in expanded leaf tissues and not expressed in roots.

It is found in the cell membrane. Functionally, receptor-like protein that regulates shoot meristem proliferation. Based on additive and synergistic phenotypes of double mutants, it is probable that unlike CLV1 and CLV2 in A.thaliana, FAE2 and TD1 do not function exclusively in a single pathway. The protein is Leucine-rich repeat receptor-like protein FASCIATED EAR2 (FEA2) of Zea mays (Maize).